We begin with the raw amino-acid sequence, 277 residues long: Large ribosomal subunit protein uL2 (277 aa).

Disordered stretches follow at residues 37-60 (KNSTAGRNSNGHITTRHKGGGHKH) and 223-265 (VVMN…KRTD). The segment covering 39-49 (STAGRNSNGHI) has biased composition (polar residues). Positions 50–60 (TTRHKGGGHKH) are enriched in basic residues. Residues 229–244 (DHPHGGGEGRTGEARE) are compositionally biased toward basic and acidic residues.

Belongs to the universal ribosomal protein uL2 family. Part of the 50S ribosomal subunit. Forms a bridge to the 30S subunit in the 70S ribosome.

In terms of biological role, one of the primary rRNA binding proteins. Required for association of the 30S and 50S subunits to form the 70S ribosome, for tRNA binding and peptide bond formation. It has been suggested to have peptidyltransferase activity; this is somewhat controversial. Makes several contacts with the 16S rRNA in the 70S ribosome. The sequence is that of Large ribosomal subunit protein uL2 from Neisseria meningitidis serogroup C (strain 053442).